A 111-amino-acid chain; its full sequence is uncharacterized protein (111 aa).

This is an uncharacterized protein from Saccharolobus solfataricus (strain ATCC 35092 / DSM 1617 / JCM 11322 / P2) (Sulfolobus solfataricus).